A 180-amino-acid chain; its full sequence is Large ribosomal subunit protein uL15 (180 aa).

The tract at residues Met-1–Gln-62 is disordered. Over residues Gly-35–Gly-44 the composition is skewed to basic residues.

This sequence belongs to the universal ribosomal protein uL15 family. Part of the 50S ribosomal subunit.

Binds to the 23S rRNA. The sequence is that of Large ribosomal subunit protein uL15 from Leptospira borgpetersenii serovar Hardjo-bovis (strain JB197).